The sequence spans 151 residues: D-aminoacyl-tRNA deacylase (151 aa).

A Gly-cisPro motif, important for rejection of L-amino acids motif is present at residues 138–139; it reads GP.

Belongs to the DTD family. Homodimer.

It localises to the cytoplasm. It carries out the reaction glycyl-tRNA(Ala) + H2O = tRNA(Ala) + glycine + H(+). The catalysed reaction is a D-aminoacyl-tRNA + H2O = a tRNA + a D-alpha-amino acid + H(+). In terms of biological role, an aminoacyl-tRNA editing enzyme that deacylates mischarged D-aminoacyl-tRNAs. Also deacylates mischarged glycyl-tRNA(Ala), protecting cells against glycine mischarging by AlaRS. Acts via tRNA-based rather than protein-based catalysis; rejects L-amino acids rather than detecting D-amino acids in the active site. By recycling D-aminoacyl-tRNA to D-amino acids and free tRNA molecules, this enzyme counteracts the toxicity associated with the formation of D-aminoacyl-tRNA entities in vivo and helps enforce protein L-homochirality. This Picosynechococcus sp. (strain ATCC 27264 / PCC 7002 / PR-6) (Agmenellum quadruplicatum) protein is D-aminoacyl-tRNA deacylase.